The chain runs to 182 residues: NAD(P)H-quinone oxidoreductase subunit I, chloroplastic (182 aa).

4Fe-4S ferredoxin-type domains are found at residues 55–84 and 95–124; these read GRIHFEFDKCIACEVCVRVCPIDLPVVDWK and LNYSIDFGICIFCGNCVEYCPTNCLSMTEE. Cys-64, Cys-67, Cys-70, Cys-74, Cys-104, Cys-107, Cys-110, and Cys-114 together coordinate [4Fe-4S] cluster.

This sequence belongs to the complex I 23 kDa subunit family. In terms of assembly, NDH is composed of at least 16 different subunits, 5 of which are encoded in the nucleus. It depends on [4Fe-4S] cluster as a cofactor.

It is found in the plastid. The protein resides in the chloroplast thylakoid membrane. It catalyses the reaction a plastoquinone + NADH + (n+1) H(+)(in) = a plastoquinol + NAD(+) + n H(+)(out). The catalysed reaction is a plastoquinone + NADPH + (n+1) H(+)(in) = a plastoquinol + NADP(+) + n H(+)(out). In terms of biological role, NDH shuttles electrons from NAD(P)H:plastoquinone, via FMN and iron-sulfur (Fe-S) centers, to quinones in the photosynthetic chain and possibly in a chloroplast respiratory chain. The immediate electron acceptor for the enzyme in this species is believed to be plastoquinone. Couples the redox reaction to proton translocation, and thus conserves the redox energy in a proton gradient. This chain is NAD(P)H-quinone oxidoreductase subunit I, chloroplastic, found in Buxus microphylla (Littleleaf boxwood).